The sequence spans 372 residues: Glutamate 5-kinase (372 aa).

Lys-14 serves as a coordination point for ATP. Substrate is bound by residues Ser-54, Asp-141, and Asn-153. ATP contacts are provided by residues 173 to 174 (TD) and 215 to 221 (TGGMITK). In terms of domain architecture, PUA spans 280 to 358 (AGRLLLDDGA…REIEAALGYI (79 aa)).

The protein belongs to the glutamate 5-kinase family.

The protein resides in the cytoplasm. It carries out the reaction L-glutamate + ATP = L-glutamyl 5-phosphate + ADP. It participates in amino-acid biosynthesis; L-proline biosynthesis; L-glutamate 5-semialdehyde from L-glutamate: step 1/2. Its function is as follows. Catalyzes the transfer of a phosphate group to glutamate to form L-glutamate 5-phosphate. This chain is Glutamate 5-kinase, found in Chromobacterium violaceum (strain ATCC 12472 / DSM 30191 / JCM 1249 / CCUG 213 / NBRC 12614 / NCIMB 9131 / NCTC 9757 / MK).